The primary structure comprises 58 residues: Small ribosomal subunit protein bS21 (58 aa).

Positions 37–58 (FYEKPSVKRKKKSEAARKRKKF) are disordered. Residues 43–58 (VKRKKKSEAARKRKKF) are compositionally biased toward basic residues.

It belongs to the bacterial ribosomal protein bS21 family.

The chain is Small ribosomal subunit protein bS21 from Enterococcus faecalis (strain ATCC 700802 / V583).